A 591-amino-acid polypeptide reads, in one-letter code: Putative BTB/POZ domain-containing protein At5g13600 (591 aa).

The region spanning 28 to 95 (PDVMIQVVDE…CYGVRIEVTP (68 aa)) is the BTB domain. In terms of domain architecture, NPH3 spans 208–493 (NWWFNDVSSF…VQVLFFEQMR (286 aa)). Y434 carries the phosphotyrosine modification.

This sequence belongs to the NPH3 family.

The protein operates within protein modification; protein ubiquitination. May act as a substrate-specific adapter of an E3 ubiquitin-protein ligase complex (CUL3-RBX1-BTB) which mediates the ubiquitination and subsequent proteasomal degradation of target proteins. The polypeptide is Putative BTB/POZ domain-containing protein At5g13600 (Arabidopsis thaliana (Mouse-ear cress)).